Consider the following 1285-residue polypeptide: Peroxidasin homolog pxn-1 (1285 aa).

A signal peptide spans 1–20; it reads MNLYLLLLVIATSSWQFVAG. In terms of domain architecture, LRRNT spans 21–53; sequence LECPVECTCDKKGLVVDCSSSGLTRIPKNISRN. 7 LRR repeats span residues 27–49, 50–72, 73–96, 97–120, 122–143, 145–168, and 204–227; these read CTCDKKGLVVDCSSSGLTRIPKN, ISRNVRSLVIRNNRIHKLKRSDL, EGFNQLETLVLTHNKIKIIEENVL, DHLPELKRLSLAHNELVYIPPLCS, SRPLASLNLKRNHIQFIDEQVL, YFPDLTQLDFSHNRIQSLRTKLFD, and KVYCTNPVELRHQALDEVDDSALT. N49 carries N-linked (GlcNAc...) asparagine glycosylation. The 49-residue stretch at 180 to 228 folds into the LRRCT domain; it reads SNPWHCDCRASKVKALLQKVKWEKKVYCTNPVELRHQALDEVDDSALTC. Residue N248 is glycosylated (N-linked (GlcNAc...) asparagine). Residues 305-324 form a disordered region; it reads RQSQHQGNGSPQFTYKPRDN. Positions 307–317 are enriched in polar residues; sequence SQHQGNGSPQF. 2 Ig-like C2-type domains span residues 315–401 and 408–495; these read PQFT…FSLD and PNIY…AKLT. 2 cysteine pairs are disulfide-bonded: C336-C385 and C429-C479. A coiled-coil region spans residues 508 to 550; sequence QIDEELLRAIAQKARQNVENAVEKTRKQLTQDKVTNTNDLKRL. A glycan (N-linked (GlcNAc...) asparagine) is linked at N595. A disulfide bond links C625 and C641. D719 contacts heme b. H720 (proton acceptor) is an active-site residue. Ca(2+) is bound at residue D721. Intrachain disulfides connect C740-C750 and C744-C771. The N-linked (GlcNAc...) asparagine glycan is linked to N741. Residues T803, F805, D807, and S809 each coordinate Ca(2+). The N-linked (GlcNAc...) asparagine glycan is linked to N858. E877 and H973 together coordinate heme b. LRR repeat units lie at residues 998 to 1022 and 1049 to 1073; these read HKAFFTPELVLTQGGVDPLLRGLFA and VSLDLAVMNIQRSRDHGLPSYTEYR. Disulfide bonds link C1076–C1133 and C1174–C1201. The LRR 12 repeat unit spans residues 1168 to 1189; the sequence is TLARLFCDNGDNIDRIQKDVFM.

The protein belongs to the peroxidase family. XPO subfamily. It depends on Ca(2+) as a cofactor. Requires heme b as cofactor. Expressed in the ventral nerve cord, the dorsal nerve cord, head neurons, GABAergic and cholinergic neurons, body wall muscles, vulval muscles, uterine muscles, intestine, the hypodermis and in coelomocytes.

Its subcellular location is the secreted. The protein localises to the extracellular space. It is found in the extracellular matrix. The catalysed reaction is L-lysyl-[collagen] + L-methionyl-[collagen] + H2O2 = [collagen]-L-lysyl-N-S-L-methionyl-[collagen] + 2 H2O + H(+). It carries out the reaction bromide + H2O2 = hypobromite + H2O. The enzyme catalyses L-lysyl-[collagen] + L-methionyl-[collagen] + hypobromite = [collagen]-L-lysyl-N-S-L-methionyl-[collagen] + bromide + H2O + H(+). It catalyses the reaction L-tyrosyl-[protein] + bromide + H2O2 + H(+) = 3-bromo-L-tyrosyl-[protein] + 2 H2O. The catalysed reaction is hypobromite + L-tyrosyl-[protein] + H(+) = 3-bromo-L-tyrosyl-[protein] + H2O. Functionally, catalyzes the two-electron oxidation of bromide by hydrogen peroxide and generates hypobromite as a reactive intermediate which mediates the formation of sulfilimine cross-links between methionine and hydroxylysine residues within an uncross-linked collagen IV NC1 hexamer. Plays a role in the attachment of tissues and in axonal guidance during early developmental stages. May functionally antagonize the peroxidasin pxn-2 to maintain neuronal development. This chain is Peroxidasin homolog pxn-1, found in Caenorhabditis elegans.